Here is a 778-residue protein sequence, read N- to C-terminus: MNKKILETLEFDKVKALFEPHLLTEQGLEQLRQLAPTAKADKIKQAFAEMKEMQALFVEQPHFTILSTKEIAGVCKRLEMGADLNIEEFLLLKRVLLTSRELQSFYANLENVSLEELALWFEKLHDFPQLQGNLQAFNDAGFIENFASEELARIRRKIHDSESQVRDVLQDLLKQKAQMLTEGIVASRNGRQVLPVKNTYRNKIAGVVHDISASGNTVYIEPREVVKLSEEIASLRADERYEMLRILQEISERVRPHAAEIANDAWIIGHLDLIRAKVRFIQERQAVVPQLSENQEIQLLHVCHPLVKNAVANDVYFGQDLTAIVITGPNTGGKTIMLKTLGLTQVMAQSGLPILADKGSRVGIFEEIFADIGDEQSIEQSLSTFSSHMTNIVDILGKVNQHSLLLLDELGAGTDPQEGAALAMAILEDLRLRQIKTMATTHYPELKAYGIETAFVQNASMEFDTATLRPTYRFMQGVPGRSNAFEIAKRLGLSEVIVGDASQQIDQDNDVNRIIEQLEEQTLESRKRLDNIREVEQENLKMNRALKKLYNELNREKETELNKAREQAAEIVDMALSESDQILKNLHSKSQLKPHEIIEAKAKLKKLAPEKVDLSKNKVLQKAKKKRAPKVGDDIVVLSYGQRGTLTSQLKDGRWEAQVGLIKMTLEEKEFDLVQAQQEKAVKKKQVNVVKRTSGRGPQARLDLRGKRYEEAMNELDTFIDQALLNNMAQVDIIHGIGTGVIREGVTKYLQRNKHVKSFGYAPQNAGGSGATIVTFKG.

328–335 lines the ATP pocket; it reads GPNTGGKT. In terms of domain architecture, Smr spans 702–777; sequence LDLRGKRYEE…GSGATIVTFK (76 aa).

It belongs to the DNA mismatch repair MutS family. MutS2 subfamily. As to quaternary structure, homodimer. Binds to stalled ribosomes, contacting rRNA.

Endonuclease that is involved in the suppression of homologous recombination and thus may have a key role in the control of bacterial genetic diversity. Its function is as follows. Acts as a ribosome collision sensor, splitting the ribosome into its 2 subunits. Detects stalled/collided 70S ribosomes which it binds and splits by an ATP-hydrolysis driven conformational change. Acts upstream of the ribosome quality control system (RQC), a ribosome-associated complex that mediates the extraction of incompletely synthesized nascent chains from stalled ribosomes and their subsequent degradation. Probably generates substrates for RQC. This Streptococcus pneumoniae (strain JJA) protein is Endonuclease MutS2.